The following is a 230-amino-acid chain: MPKYTLPTRDALLKAMQVGETSIEAAEYMATRFEQILTKAKLLPECNDMLEKIKEYAQFVKFKLLSSAQVWSGQERPTSDYQNTQENKAEFLASHLEGLPSGLKLEVAIGDDAKILRGFSSNGKMVEGDQLKTMDGLLEGWLAKNSLAISGGAVVKIDNTGNQTKVDPQEIRQLINDSEKGVAKYFADKGVGMEVAQRTYQEPKALETKREEIRQEIESGAEAPTTQSIR.

The tract at residues 202 to 230 is disordered; that stretch reads EPKALETKREEIRQEIESGAEAPTTQSIR. The segment covering 204–217 has biased composition (basic and acidic residues); that stretch reads KALETKREEIRQEI.

As to quaternary structure, the T4BSS is a complex nanomachine composed of several subcomplexes. This subunit is part of the Type IV Coupling Complex (T4CC), a subcomplex composed of the DotLMNYZ core and the IcmSW-LvgA adapter subunits, linked by the C-terminal tail of DotL. Six DotLMNYZ hetero-pentameric units may assemble into a hexameric nanomachine, forming an inner membrane channel for effectors to pass through. Interacts exclusively with DotZ. DotY and DotZ are co-dependent for the assembly into the T4CC.

The protein resides in the cytoplasm. In terms of biological role, component of the Dot/Icm type IVB secretion system (T4BSS), which is used to inject bacterial effector proteins into eukaryotic host cells. Part of a subcomplex which recruits effector proteins and delivers them to the core transmembrane subcomplex. DotY and DotZ play a role in effector translocation, but are not essential and do not influence the stability of the subcomplex main components. The DotY/DotZ main function is to optimize secretion by modulating the delivery trajectory of the IcmSW module and the localization of the machinery to the poles. The protein is Type 4 apparatus protein DotY of Legionella pneumophila subsp. pneumophila (strain Philadelphia 1 / ATCC 33152 / DSM 7513).